The primary structure comprises 195 residues: Imidazoleglycerol-phosphate dehydratase (195 aa).

The protein belongs to the imidazoleglycerol-phosphate dehydratase family.

Its subcellular location is the cytoplasm. The enzyme catalyses D-erythro-1-(imidazol-4-yl)glycerol 3-phosphate = 3-(imidazol-4-yl)-2-oxopropyl phosphate + H2O. The protein operates within amino-acid biosynthesis; L-histidine biosynthesis; L-histidine from 5-phospho-alpha-D-ribose 1-diphosphate: step 6/9. The chain is Imidazoleglycerol-phosphate dehydratase from Thermotoga maritima (strain ATCC 43589 / DSM 3109 / JCM 10099 / NBRC 100826 / MSB8).